Reading from the N-terminus, the 92-residue chain is Small ribosomal subunit protein bS20 (92 aa).

The disordered stretch occupies residues 1–23; the sequence is MANTTSAKKATRKIARRTDVNKA.

It belongs to the bacterial ribosomal protein bS20 family.

In terms of biological role, binds directly to 16S ribosomal RNA. This Rhizobium leguminosarum bv. trifolii (strain WSM2304) protein is Small ribosomal subunit protein bS20.